The following is a 427-amino-acid chain: Endothelin-1 receptor (427 aa).

The signal sequence occupies residues 1–20; it reads METFCFRVSFWVALLGCVIS. Residues 21 to 80 are Extracellular-facing; sequence DNPESHSTNLSTHVDDFTTFRGTEFSLVVTTHRPTNLALPSNGSMHNYCPQQTKITSAFK. N-linked (GlcNAc...) asparagine glycosylation is found at asparagine 29 and asparagine 62. The chain crosses the membrane as a helical span at residues 81 to 102; the sequence is YINTVISCTIFIVGMVGNATLL. At 103–112 the chain is on the cytoplasmic side; that stretch reads RIIYQNKCMR. The helical transmembrane segment at 113–132 threads the bilayer; it reads NGPNALIASLALGDLIYVVI. The Extracellular portion of the chain corresponds to 133-159; the sequence is DLPINVFKLLAGRWPFENHDFGVFLCK. A disulfide bond links cysteine 158 and cysteine 239. Residues 160 to 181 traverse the membrane as a helical segment; it reads LFPFLQKSSVGITVLNLCALSV. Topologically, residues 182-205 are cytoplasmic; it reads DRYRAVASWSRVQGIGIPLVTAIE. Residues 206–229 traverse the membrane as a helical segment; that stretch reads IVSIWILSFILAIPEAIGFVMVPF. Residues 230-256 lie on the Extracellular side of the membrane; that stretch reads EYKGEEHKTCMLNATSKFMEFYQDVKD. Residues 257 to 278 traverse the membrane as a helical segment; that stretch reads WWLFGFYFCMPLVCTAIFYTLM. Residues 279–306 are Cytoplasmic-facing; it reads TCEMLNRRNGSLRIALSEHLKQRREVAK. The helical transmembrane segment at 307–328 threads the bilayer; the sequence is TVFCLVVIFALCWFPLHLSRIL. Residues 329–347 are Extracellular-facing; the sequence is KKTVYDEMDKNRCELLSFL. Residues 348–372 form a helical membrane-spanning segment; that stretch reads LLMDYIGINLATMNSCINPIALYFV. At 373 to 427 the chain is on the cytoplasmic side; it reads SKKFKNCFQSCLCCCCYQSKSLMTSVPMNGTSIQWKNHEQNNHNTERSSHKDSIN. At serine 425 the chain carries Phosphoserine.

Belongs to the G-protein coupled receptor 1 family. Endothelin receptor subfamily. EDNRA sub-subfamily. Interacts with HDAC7 and KAT5.

It is found in the cell membrane. In terms of biological role, receptor for endothelin-1. Mediates its action by association with G proteins that activate a phosphatidylinositol-calcium second messenger system. The rank order of binding affinities for ET-A is: ET1 &gt; ET2 &gt;&gt; ET3. The protein is Endothelin-1 receptor of Sus scrofa (Pig).